The chain runs to 1441 residues: MGNGNSALLGTDLDKFEKIRLKRGGKKCYRLKHLCWCKGELDRFGLSDKLLETQQGCEKILSVCWPLYDQGSDNLKALVGTVCVVACIHAGIEIKSTQDALKKLKVITRKEEKQEDESKNFPVQRDAAGQYQYTPISPRIIQTWVKTVEEKKWKPEVIPLFSALTEGAISHDLNIMLNAVGDHQGAMQVLKDVINEQAAEWDLTHPQQQPAQPGGGLRTPSGSDIAGTTSTVEEQLAWMNMQQNAINVGTIYKSWIILGMNRLVKSHCPISITDVRQGPKEAFKDYVDRFYNVMRAEQASGEVKMWMQQHLLIENANPECKQILRSLGKGATLEEMLEACQGVGGPQHKARLMAEMMRTVVGQSQNFVQQRGPQRGPVRQPTGRKPICFNCNKEGHVARFFKAPRRKGCWNCGAMDHQKAQCPKPAQQQRVNFFRVWPLGSLQTGELSGTRGDSNSSTIRGETSAENSEHLSEIRERAQAEDEGGEERGGFSFPEYSLSRRPIEEVSVDGVTIRALLDTGADDTIFNERNIKLKGNWQPKIIGGIGGNLRVKQYDNVYVEIRGKGTFGTVLIGPTPIDIIGRNIMEKLGGKLILAQLSDKIPITKVKLKPGVDGPRIKQWPLSKEKIVGLQKICDRLEEEGKISRVDPGNNYNTPIFAIKKKDKNEWRKLIDFRELNKLTQDFHELQLGIPHPAGIKKCKRITVLDIGDAYFSIPLDPDYRPYTAFTVPSVNNQAPGKRYMYNVLPQGWKGSPCIFQGTVASLLEVFRKNHPTVQLYQYMDDLFVGSDYTAEEHEKAIVELRALLMTWNLETPEKKYQKEPPFHWMGYELHPDKWKIEKVQLPELAEQPTVNEIQKLVGKLNWAAQLYPGIKTKQLCKLIRGGLNITEKVTMTEEARLEYEQNKEILAEEQEGSYYDPNKELYVRFQKTTGGDISFQWKQGNKVLRAGKYGKQKTAHSNDLMKLAGATQKVGRESIVIWGFVPKMQIPTTREIWEDWWHEYWQCTWIPEVEFISTPMLEREWYSLSPEPLEGVETYYVDGAANRDSKMGKAGYITDRGFQRVEEYLNTTNQQTELHAVKLALEDSGSYVNIVTDSQYVVGILASRPTETDHPIVKEIIELMKGKEKIYLSWLPAHKGIGGNEQIDKLVSSGIRKVLFLQNIEPAQEEHEKYHSNEAQLREKFHLPALVAKQIVQSCSKCCHHGEPIKGQTDASLGVWQIDCTHLENQIIIVAVHVASGFMKAEVITAETGKKTAEFLLKLAAQWPISKLHTDNGPNFTSQEVETMCWWLGIEHTFGIPYNPQSQGVVENKNKYLKELIEKIREDCKELKTAVAMATFIHNFKQRGGLGGMTAGERIVNMINTELEYQYQQNQISKNLNFKVYFREGRDQLWKGPGILLWKGEGAVVLKYQEEIKIVPRRKCKIIKDYGESGKNSQVNLESV.

Glycine 2 carries the N-myristoyl glycine; by host lipid modification. The Nuclear export signal signature appears at 16–22; that stretch reads FEKIRLK. The Nuclear localization signal motif lies at 26-32; it reads KKCYRLK. The segment at 204–226 is disordered; that stretch reads THPQQQPAQPGGGLRTPSGSDIA. 2 consecutive CCHC-type zinc fingers follow at residues 386-403 and 407-424; these read PICF…FFKA and KGCW…QCPK. Over residues 444–466 the composition is skewed to polar residues; that stretch reads TGELSGTRGDSNSSTIRGETSAE. Positions 444–494 are disordered; the sequence is TGELSGTRGDSNSSTIRGETSAENSEHLSEIRERAQAEDEGGEERGGFSFP. Positions 467–480 are enriched in basic and acidic residues; that stretch reads NSEHLSEIRERAQA. The region spanning 513 to 584 is the Peptidase A2 domain; sequence IRALLDTGAD…TPIDIIGRNI (72 aa). Aspartate 518 serves as the catalytic For protease activity; shared with dimeric partner. One can recognise a Reverse transcriptase domain in the interval 640–830; sequence EGKISRVDPG…PPFHWMGYEL (191 aa). The Mg(2+) site is built by aspartate 706, aspartate 781, and aspartate 782. An RT 'primer grip' region spans residues 823–831; sequence FHWMGYELH. The Tryptophan repeat motif motif lies at 994–1010; it reads WEDWWHEYWQCTWIPEV. The RNase H type-1 domain occupies 1030 to 1153; it reads LEGVETYYVD…IDKLVSSGIR (124 aa). Aspartate 1039, glutamate 1074, aspartate 1094, and aspartate 1145 together coordinate Mg(2+). An Integrase-type zinc finger spans residues 1159-1200; that stretch reads QNIEPAQEEHEKYHSNEAQLREKFHLPALVAKQIVQSCSKCC. 4 residues coordinate Zn(2+): histidine 1168, histidine 1172, cysteine 1196, and cysteine 1199. Residues 1210–1360 form the Integrase catalytic domain; sequence TDASLGVWQI…TAGERIVNMI (151 aa). Residues aspartate 1220 and aspartate 1272 each coordinate Mg(2+). A DNA-binding region (integrase-type) is located at residues 1379–1426; the sequence is FKVYFREGRDQLWKGPGILLWKGEGAVVLKYQEEIKIVPRRKCKIIKD.

In terms of assembly, homotrimer. Interacts with gp41 (via C-terminus). Homodimer. The active site consists of two apposed aspartic acid residues. As to quaternary structure, heterodimer of p66 RT and p51 RT (RT p66/p51). Heterodimerization of RT is essential for DNA polymerase activity. Despite the sequence identities, p66 RT and p51 RT have distinct folding. In terms of assembly, homotetramer; may further associate as a homohexadecamer. Mg(2+) is required as a cofactor. In terms of processing, specific enzymatic cleavages by the viral protease yield mature proteins. The protease is released by autocatalytic cleavage. The polyprotein is cleaved during and after budding, this process is termed maturation. Proteolytic cleavage of p66 RT removes the RNase H domain to yield the p51 RT subunit. Post-translationally, capsid protein p24 is phosphorylated.

The protein resides in the virion. It localises to the host nucleus. Its subcellular location is the host cytoplasm. The protein localises to the host cell membrane. The enzyme catalyses Specific for a P1 residue that is hydrophobic, and P1' variable, but often Pro.. It carries out the reaction Endohydrolysis of RNA in RNA/DNA hybrids. Three different cleavage modes: 1. sequence-specific internal cleavage of RNA. Human immunodeficiency virus type 1 and Moloney murine leukemia virus enzymes prefer to cleave the RNA strand one nucleotide away from the RNA-DNA junction. 2. RNA 5'-end directed cleavage 13-19 nucleotides from the RNA end. 3. DNA 3'-end directed cleavage 15-20 nucleotides away from the primer terminus.. The catalysed reaction is 3'-end directed exonucleolytic cleavage of viral RNA-DNA hybrid.. It catalyses the reaction DNA(n) + a 2'-deoxyribonucleoside 5'-triphosphate = DNA(n+1) + diphosphate. With respect to regulation, the viral protease is inhibited by many synthetic protease inhibitors (PIs), such as amprenavir, atazanavir, indinavir, loprinavir, nelfinavir, ritonavir and saquinavir. RT can be inhibited either by nucleoside RT inhibitors (NRTIs) or by non nucleoside RT inhibitors (NNRTIs). NRTIs act as chain terminators, whereas NNRTIs inhibit DNA polymerization by binding a small hydrophobic pocket near the RT active site and inducing an allosteric change in this region. Classical NRTIs are abacavir, adefovir (PMEA), didanosine (ddI), lamivudine (3TC), stavudine (d4T), tenofovir (PMPA), zalcitabine (ddC), and zidovudine (AZT). Classical NNRTIs are atevirdine (BHAP U-87201E), delavirdine, efavirenz (DMP-266), emivirine (I-EBU), and nevirapine (BI-RG-587). The tritherapies used as a basic effective treatment of AIDS associate two NRTIs and one NNRTI. Use of protease inhibitors in tritherapy regimens permit more ambitious therapeutic strategies. In terms of biological role, gag-Pol polyprotein and Gag polyprotein may regulate their own translation, by the binding genomic RNA in the 5'-UTR. At low concentration, Gag-Pol and Gag would promote translation, whereas at high concentration, the polyproteins encapsidate genomic RNA and then shut off translation. Functionally, matrix protein p17 has two main functions: in infected cell, it targets Gag and Gag-pol polyproteins to the plasma membrane via a multipartite membrane-binding signal, that includes its myristointegration complex. The myristoylation signal and the NLS exert conflicting influences its subcellular localization. The key regulation of these motifs might be phosphorylation of a portion of MA molecules on the C-terminal tyrosine at the time of virus maturation, by virion-associated cellular tyrosine kinase. Implicated in the release from host cell mediated by Vpu. Its function is as follows. Capsid protein p24 forms the conical core that encapsulates the genomic RNA-nucleocapsid complex in the virion. The core is constituted by capsid protein hexamer subunits. The core is disassembled soon after virion entry. Interaction with host PPIA/CYPA protects the virus from restriction by host TRIM5-alpha and from an unknown antiviral activity in host cells. This capsid restriction by TRIM5 is one of the factors which restricts SIV to the simian species. Nucleocapsid protein p7 encapsulates and protects viral dimeric unspliced (genomic) RNA. Binds these RNAs through its zinc fingers. Facilitates rearangement of nucleic acid secondary structure during retrotranscription of genomic RNA. This capability is referred to as nucleic acid chaperone activity. In terms of biological role, the aspartyl protease mediates proteolytic cleavages of Gag and Gag-Pol polyproteins during or shortly after the release of the virion from the plasma membrane. Cleavages take place as an ordered, step-wise cascade to yield mature proteins. This process is called maturation. Displays maximal activity during the budding process just prior to particle release from the cell. Also cleaves Nef and Vif, probably concomitantly with viral structural proteins on maturation of virus particles. Hydrolyzes host EIF4GI and PABP1 in order to shut off the capped cellular mRNA translation. The resulting inhibition of cellular protein synthesis serves to ensure maximal viral gene expression and to evade host immune response. Functionally, reverse transcriptase/ribonuclease H (RT) is a multifunctional enzyme that converts the viral dimeric RNA genome into dsDNA in the cytoplasm, shortly after virus entry into the cell. This enzyme displays a DNA polymerase activity that can copy either DNA or RNA templates, and a ribonuclease H (RNase H) activity that cleaves the RNA strand of RNA-DNA heteroduplexes in a partially processive 3' to 5' endonucleasic mode. Conversion of viral genomic RNA into dsDNA requires many steps. A tRNA binds to the primer-binding site (PBS) situated at the 5'-end of the viral RNA. RT uses the 3' end of the tRNA primer to perform a short round of RNA-dependent minus-strand DNA synthesis. The reading proceeds through the U5 region and ends after the repeated (R) region which is present at both ends of viral RNA. The portion of the RNA-DNA heteroduplex is digested by the RNase H, resulting in a ssDNA product attached to the tRNA primer. This ssDNA/tRNA hybridizes with the identical R region situated at the 3' end of viral RNA. This template exchange, known as minus-strand DNA strong stop transfer, can be either intra- or intermolecular. RT uses the 3' end of this newly synthesized short ssDNA to perform the RNA-dependent minus-strand DNA synthesis of the whole template. RNase H digests the RNA template except for two polypurine tracts (PPTs) situated at the 5'-end and near the center of the genome. It is not clear if both polymerase and RNase H activities are simultaneous. RNase H can probably proceed both in a polymerase-dependent (RNA cut into small fragments by the same RT performing DNA synthesis) and a polymerase-independent mode (cleavage of remaining RNA fragments by free RTs). Secondly, RT performs DNA-directed plus-strand DNA synthesis using the PPTs that have not been removed by RNase H as primers. PPTs and tRNA primers are then removed by RNase H. The 3' and 5' ssDNA PBS regions hybridize to form a circular dsDNA intermediate. Strand displacement synthesis by RT to the PBS and PPT ends produces a blunt ended, linear dsDNA copy of the viral genome that includes long terminal repeats (LTRs) at both ends. Its function is as follows. Integrase catalyzes viral DNA integration into the host chromosome, by performing a series of DNA cutting and joining reactions. This enzyme activity takes place after virion entry into a cell and reverse transcription of the RNA genome in dsDNA. The first step in the integration process is 3' processing. This step requires a complex comprising the viral genome, matrix protein, Vpr and integrase. This complex is called the pre-integration complex (PIC). The integrase protein removes 2 nucleotides from each 3' end of the viral DNA, leaving recessed CA OH's at the 3' ends. In the second step, the PIC enters cell nucleus. This process is mediated through integrase and Vpr proteins, and allows the virus to infect a non dividing cell. This ability to enter the nucleus is specific of lentiviruses, other retroviruses cannot and rely on cell division to access cell chromosomes. In the third step, termed strand transfer, the integrase protein joins the previously processed 3' ends to the 5' ends of strands of target cellular DNA at the site of integration. The 5'-ends are produced by integrase-catalyzed staggered cuts, 5 bp apart. A Y-shaped, gapped, recombination intermediate results, with the 5'-ends of the viral DNA strands and the 3' ends of target DNA strands remaining unjoined, flanking a gap of 5 bp. The last step is viral DNA integration into host chromosome. This involves host DNA repair synthesis in which the 5 bp gaps between the unjoined strands are filled in and then ligated. Since this process occurs at both cuts flanking the SIV genome, a 5 bp duplication of host DNA is produced at the ends of SIV integration. Alternatively, Integrase may catalyze the excision of viral DNA just after strand transfer, this is termed disintegration. This chain is Gag-Pol polyprotein (gag-pol), found in Cercopithecidae (Old World monkeys).